A 250-amino-acid chain; its full sequence is 2,3-bisphosphoglycerate-dependent phosphoglycerate mutase (250 aa).

Substrate-binding positions include 10-17 (RHGESQWN), 23-24 (TG), Arg-62, 89-92 (ERHY), Lys-100, 116-117 (RR), and 185-186 (GN). His-11 serves as the catalytic Tele-phosphohistidine intermediate. The Proton donor/acceptor role is filled by Glu-89.

It belongs to the phosphoglycerate mutase family. BPG-dependent PGAM subfamily. As to quaternary structure, homodimer.

The enzyme catalyses (2R)-2-phosphoglycerate = (2R)-3-phosphoglycerate. Its pathway is carbohydrate degradation; glycolysis; pyruvate from D-glyceraldehyde 3-phosphate: step 3/5. Its function is as follows. Catalyzes the interconversion of 2-phosphoglycerate and 3-phosphoglycerate. The polypeptide is 2,3-bisphosphoglycerate-dependent phosphoglycerate mutase (Shigella dysenteriae serotype 1 (strain Sd197)).